Reading from the N-terminus, the 142-residue chain is Baculoviral IAP repeat-containing protein 5 (142 aa).

One copy of the BIR repeat lies at 18 to 88 (RIYTFKNWPF…KHSPGCAFLT (71 aa)). Lysine 23 carries the post-translational modification N6-acetyllysine. Threonine 34 carries the post-translational modification Phosphothreonine; by CDK1 and CDK15. Phosphothreonine is present on threonine 48. Zn(2+) contacts are provided by cysteine 57, cysteine 60, histidine 77, and cysteine 84. 4 positions are modified to N6-acetyllysine: lysine 90, lysine 110, lysine 112, and lysine 115. Phosphothreonine; by AURKB is present on threonine 117.

This sequence belongs to the IAP family. In terms of assembly, monomer or homodimer. Exists as a homodimer in the apo state and as a monomer in the CPC-bound state. The monomer protects cells against apoptosis more efficiently than the dimer. Only the dimeric form is capable of enhancing tubulin stability in cells. When phosphorylated, interacts with LAMTOR5/HBXIP; the resulting complex binds pro-CASP9, as well as active CASP9, but much less efficiently. Component of the chromosomal passenger complex (CPC) composed of at least BIRC5/survivin, CDCA8/borealin, INCENP, AURKB or AURKC; in the complex forms a triple-helix bundle-based subcomplex with INCENP and CDCA8. Interacts with JTB. Interacts (via BIR domain) with histone H3 phosphorylated at 'Thr-3' (H3pT3). Interacts with EVI5. Interacts with GTP-bound RAN in both the S and M phases of the cell cycle. Interacts with USP9X. Interacts with tubulin. Interacts with BIRC2/c-IAP1. The monomeric form interacts with XIAP/BIRC4. Both the dimeric and monomeric form can interact with DIABLO/SMAC. Interacts with BIRC6/bruce. Interacts with FBXL7; this interaction facilitates the polyubiquitination and subsequent proteasomal degradation of BIRC5 by the SCF(FBXL7) E3 ubiquitin-protein ligase complex. In terms of processing, ubiquitinated by the Cul9-RING ubiquitin-protein ligase complex, leading to its degradation. Ubiquitination is required for centrosomal targeting. Deubiquitinated by USP35 or USP38; leading to stabilization. In vitro phosphorylation at Thr-117 by AURKB prevents interaction with INCENP and localization to mitotic chromosomes. Phosphorylation at Thr-48 by CK2 is critical for its mitotic and anti-apoptotic activities. Phosphorylation at Thr-34 by CDK15 is critical for its anti-apoptotic activity.

The protein localises to the cytoplasm. It is found in the nucleus. Its subcellular location is the chromosome. It localises to the centromere. The protein resides in the cytoskeleton. The protein localises to the spindle. It is found in the kinetochore. Its subcellular location is the midbody. Its function is as follows. Multitasking protein that has dual roles in promoting cell proliferation and preventing apoptosis. Component of a chromosome passage protein complex (CPC) which is essential for chromosome alignment and segregation during mitosis and cytokinesis. Acts as an important regulator of the localization of this complex; directs CPC movement to different locations from the inner centromere during prometaphase to midbody during cytokinesis and participates in the organization of the center spindle by associating with polymerized microtubules. Involved in the recruitment of CPC to centromeres during early mitosis via association with histone H3 phosphorylated at 'Thr-3' (H3pT3) during mitosis. The complex with RAN plays a role in mitotic spindle formation by serving as a physical scaffold to help deliver the RAN effector molecule TPX2 to microtubules. May counteract a default induction of apoptosis in G2/M phase. The acetylated form represses STAT3 transactivation of target gene promoters. May play a role in neoplasia. Inhibitor of CASP3 and CASP7. Essential for the maintenance of mitochondrial integrity and function. The polypeptide is Baculoviral IAP repeat-containing protein 5 (Birc5) (Rattus norvegicus (Rat)).